A 205-amino-acid polypeptide reads, in one-letter code: MSSMNPEYDYLFKLLLIGDSGVGKSCLLLRFADDTYTESYISTIGVDFKIRTIELDGKTIKLQIWDTAGQERFRTITSSYYRGAHGIIVVYDVTDQGSFNNVKQWLQEIDRYASENVNKLLVGNKCDLTTKKVVDYTTAKEFADSLGIPFLETSAKNATNVEQSFMTMAAEIKKRMGPGATAGGAEKSNVKIQSTPVKQSGGGCC.

Ser-2 carries the N-acetylserine modification. GTP is bound by residues Ser-20, Gly-21, Gly-23, Lys-24, Ser-25, Cys-26, Glu-38, and Thr-43. Mg(2+) is bound at residue Ser-25. Positions Asp-34 to Phe-48 match the Switch 1 motif. A Mg(2+)-binding site is contributed by Thr-43. Glycyl lysine isopeptide (Lys-Gly) (interchain with G-Cter in ubiquitin) cross-links involve residues Lys-49 and Lys-61. Position 66 (Asp-66) interacts with Mg(2+). Residues Asp-66–Gly-83 carry the Switch 2 motif. GTP-binding residues include Gly-69, Asn-124, Lys-125, Asp-127, Ala-155, and Lys-156. The interval Pro-178–Cys-205 is disordered. Ser-194 is subject to Phosphoserine; by CDK1. Residues Cys-204 and Cys-205 are each lipidated (S-geranylgeranyl cysteine).

This sequence belongs to the small GTPase superfamily. Rab family. In terms of assembly, may interact with YIPF5. Interacts with C9orf72; the interaction mediates recruitment of RAB1A to the ATG1/ULK1 kinase complex. Interacts with GDI1; this promotes dissociation from membranes. Mg(2+) serves as cofactor. Post-translationally, phosphorylated by CDK1 kinase during mitosis. Ubiquitinated via 'Lys-11'-linked ubiquitination on Lys-49 and Lys-61; impairing the recruitment of guanosine diphosphate (GDP) dissociation inhibitor 1/GDI1.

The protein resides in the golgi apparatus. It localises to the endoplasmic reticulum. The protein localises to the early endosome. It is found in the cytoplasm. Its subcellular location is the cytosol. The protein resides in the membrane. It localises to the melanosome. The enzyme catalyses GTP + H2O = GDP + phosphate + H(+). Its activity is regulated as follows. Regulated by guanine nucleotide exchange factors (GEFs) which promote the exchange of bound GDP for free GTP. Regulated by GTPase activating proteins (GAPs) which increase the GTP hydrolysis activity. Inhibited by GDP dissociation inhibitors (GDIs). The small GTPases Rab are key regulators of intracellular membrane trafficking, from the formation of transport vesicles to their fusion with membranes. Rabs cycle between an inactive GDP-bound form and an active GTP-bound form that is able to recruit to membranes different sets of downstream effectors directly responsible for vesicle formation, movement, tethering and fusion. RAB1A regulates vesicular protein transport from the endoplasmic reticulum (ER) to the Golgi compartment and on to the cell surface, and plays a role in IL-8 and growth hormone secretion. Required to modulate the compacted morphology of the Golgi. Regulates the level of CASR present at the cell membrane. Plays a role in cell adhesion and cell migration, via its role in protein trafficking. Plays a role in autophagosome assembly and cellular defense reactions against pathogenic bacteria. Plays a role in microtubule-dependent protein transport by early endosomes and in anterograde melanosome transport. This chain is Ras-related protein Rab-1A (RAB1A), found in Sus scrofa (Pig).